Here is a 306-residue protein sequence, read N- to C-terminus: D-alanine--D-alanine ligase (306 aa).

Residues 100–295 (KQIFRRAGLP…FGQLLERLME (196 aa)) form the ATP-grasp domain. Position 127 to 180 (127 to 180 (RLPYPLFVKSNTGGSSLRLGRARNRAELDDIMGQIFAAGEEVIMEPVLPGREVT)) interacts with ATP. Mg(2+)-binding residues include Asp-249, Glu-262, and Asn-264.

It belongs to the D-alanine--D-alanine ligase family. Mg(2+) serves as cofactor. It depends on Mn(2+) as a cofactor.

The protein resides in the cytoplasm. The catalysed reaction is 2 D-alanine + ATP = D-alanyl-D-alanine + ADP + phosphate + H(+). It functions in the pathway cell wall biogenesis; peptidoglycan biosynthesis. Its function is as follows. Cell wall formation. This Desulfovibrio desulfuricans (strain ATCC 27774 / DSM 6949 / MB) protein is D-alanine--D-alanine ligase.